The chain runs to 262 residues: Snake venom serine protease (262 aa).

Positions 1–18 are cleaved as a signal peptide; it reads MVLIRVLANLLILQLSYA. Positions 19 to 24 are excised as a propeptide; that stretch reads QKSSEL. Residues 25–253 form the Peptidase S1 domain; sequence VIGGDECNIN…YTEWIQSIIA (229 aa). Intrachain disulfides connect Cys31-Cys167, Cys50-Cys66, Cys102-Cys260, Cys146-Cys214, Cys178-Cys193, and Cys204-Cys229. Active-site charge relay system residues include His65 and Asp114. 2 N-linked (GlcNAc...) asparagine glycosylation sites follow: Asn125 and Asn158. Ser208 (charge relay system) is an active-site residue.

Belongs to the peptidase S1 family. Snake venom subfamily. As to quaternary structure, monomer. As to expression, expressed by the venom gland.

The protein resides in the secreted. Functionally, snake venom serine protease that may act in the hemostasis system of the prey. In Crotalus durissus durissus (Central American rattlesnake), this protein is Snake venom serine protease.